The chain runs to 304 residues: Cyclin-dependent kinase 3 (304 aa).

Residues 4–286 (FQKVEKIGEG…AKTALAHPYF (283 aa)) form the Protein kinase domain. ATP contacts are provided by residues 10–18 (IGEGTYGVV) and K33. The active-site Proton acceptor is the D127.

Belongs to the protein kinase superfamily. CMGC Ser/Thr protein kinase family. CDC2/CDKX subfamily. As to quaternary structure, interacts with CABLES1 and ATF1. Binding to CCNC/cyclin-C promotes RB1 phosphorylation. Binds to CABLES2.

It carries out the reaction L-seryl-[protein] + ATP = O-phospho-L-seryl-[protein] + ADP + H(+). It catalyses the reaction L-threonyl-[protein] + ATP = O-phospho-L-threonyl-[protein] + ADP + H(+). Its function is as follows. Serine/threonine-protein kinase that plays a critical role in the control of the eukaryotic cell cycle; involved in G0-G1 and G1-S cell cycle transitions. Interacts with CCNC/cyclin-C during interphase. Phosphorylates histone H1, ATF1, RB1 and CABLES1. ATF1 phosphorylation triggers ATF1 transactivation and transcriptional activities, and promotes cell proliferation and transformation. CDK3/cyclin-C mediated RB1 phosphorylation is required for G0-G1 transition. Promotes G1-S transition probably by contributing to the activation of E2F1, E2F2 and E2F3 in a RB1-independent manner. This Mus musculus (Mouse) protein is Cyclin-dependent kinase 3 (Cdk3).